The following is an 80-amino-acid chain: Exodeoxyribonuclease 7 small subunit (80 aa).

Belongs to the XseB family. In terms of assembly, heterooligomer composed of large and small subunits.

Its subcellular location is the cytoplasm. It carries out the reaction Exonucleolytic cleavage in either 5'- to 3'- or 3'- to 5'-direction to yield nucleoside 5'-phosphates.. In terms of biological role, bidirectionally degrades single-stranded DNA into large acid-insoluble oligonucleotides, which are then degraded further into small acid-soluble oligonucleotides. This is Exodeoxyribonuclease 7 small subunit from Phenylobacterium zucineum (strain HLK1).